The sequence spans 128 residues: Transcription antitermination protein NusB (128 aa).

The protein belongs to the NusB family.

Its function is as follows. Involved in transcription antitermination. Required for transcription of ribosomal RNA (rRNA) genes. Binds specifically to the boxA antiterminator sequence of the ribosomal RNA (rrn) operons. In Listeria monocytogenes serotype 4a (strain HCC23), this protein is Transcription antitermination protein NusB.